The primary structure comprises 430 residues: Probable dual-specificity RNA methyltransferase RlmN (430 aa).

Glu-125 (proton acceptor) is an active-site residue. Residues 152–395 form the Radical SAM core domain; sequence RHGRVTLCVS…VTVRDTRGRE (244 aa). The cysteines at positions 159 and 400 are disulfide-linked. Residues Cys-166, Cys-170, and Cys-173 each contribute to the [4Fe-4S] cluster site. Residues 221–222, Ser-255, 278–280, and Asn-357 contribute to the S-adenosyl-L-methionine site; these read GE and SLH. Cys-400 serves as the catalytic S-methylcysteine intermediate.

It belongs to the radical SAM superfamily. RlmN family. [4Fe-4S] cluster is required as a cofactor.

It localises to the cytoplasm. The catalysed reaction is adenosine(2503) in 23S rRNA + 2 reduced [2Fe-2S]-[ferredoxin] + 2 S-adenosyl-L-methionine = 2-methyladenosine(2503) in 23S rRNA + 5'-deoxyadenosine + L-methionine + 2 oxidized [2Fe-2S]-[ferredoxin] + S-adenosyl-L-homocysteine. It carries out the reaction adenosine(37) in tRNA + 2 reduced [2Fe-2S]-[ferredoxin] + 2 S-adenosyl-L-methionine = 2-methyladenosine(37) in tRNA + 5'-deoxyadenosine + L-methionine + 2 oxidized [2Fe-2S]-[ferredoxin] + S-adenosyl-L-homocysteine. Functionally, specifically methylates position 2 of adenine 2503 in 23S rRNA and position 2 of adenine 37 in tRNAs. In Acidothermus cellulolyticus (strain ATCC 43068 / DSM 8971 / 11B), this protein is Probable dual-specificity RNA methyltransferase RlmN.